A 479-amino-acid chain; its full sequence is Lysosomal protective protein (479 aa).

A signal peptide spans 1–27 (MFRAALWPPVLLLLQLLLLACAPGGEG). Intrachain disulfides connect Cys87/Cys361, Cys239/Cys255, Cys240/Cys245, and Cys280/Cys330. A glycan (N-linked (GlcNAc...) asparagine) is linked at Asn144. The active site involves Ser177. Asn332 is a glycosylation site (N-linked (GlcNAc...) asparagine). Active-site residues include Asp399 and His456.

This sequence belongs to the peptidase S10 family. In terms of assembly, heterodimer of a 32 kDa chain and a 20 kDa chain; disulfide-linked.

It localises to the lysosome. The enzyme catalyses Release of a C-terminal amino acid with broad specificity.. Its function is as follows. Protective protein appears to be essential for both the activity of beta-galactosidase and neuraminidase, it associates with these enzymes and exerts a protective function necessary for their stability and activity. This protein is also a carboxypeptidase and can deamidate tachykinins. The sequence is that of Lysosomal protective protein (CTSA) from Bos taurus (Bovine).